The primary structure comprises 507 residues: Putative propionyl-CoA carboxylase beta chain (507 aa).

The span at 1–25 (MNEHMDHFYTKRKQAEEGGGREKLA) shows a compositional bias: basic and acidic residues. The disordered stretch occupies residues 1–30 (MNEHMDHFYTKRKQAEEGGGREKLAQQRQK). A CoA carboxyltransferase N-terminal domain is found at 1 to 254 (MNEHMDHFYT…NGRTTEPKPE (254 aa)). Residues 1-501 (MNEHMDHFYT…HKTEERPKKK (501 aa)) are carboxyltransferase. Residues 256–501 (EASRPLLNRL…HKTEERPKKK (246 aa)) enclose the CoA carboxyltransferase C-terminal domain.

It belongs to the AccD/PCCB family. As to quaternary structure, probably a dodecamer composed of six biotin-containing alpha subunits and six beta subunits.

It catalyses the reaction propanoyl-CoA + hydrogencarbonate + ATP = (S)-methylmalonyl-CoA + ADP + phosphate + H(+). It participates in metabolic intermediate metabolism; propanoyl-CoA degradation; succinyl-CoA from propanoyl-CoA: step 1/3. This Bacillus subtilis (strain 168) protein is Putative propionyl-CoA carboxylase beta chain (yqjD).